The following is a 161-amino-acid chain: DNA-directed RNA polymerase 18 kDa subunit (161 aa).

It belongs to the poxviridae DNA-directed RNA polymerase 18 kDa subunit family. In terms of assembly, the DNA-dependent RNA polymerase used for intermediate and late genes expression consists of eight subunits 147 kDa, 133 kDa, 35 kDa, 30 kDa, 22 kDa, 19 kDa, 18 kDa and 7 kDa totalling more than 500 kDa in mass. The same holoenzyme, with the addition of the transcription-specificity factor RAP94, is used for early gene expression.

It localises to the virion. The enzyme catalyses RNA(n) + a ribonucleoside 5'-triphosphate = RNA(n+1) + diphosphate. Its function is as follows. Part of the DNA-dependent RNA polymerase which catalyzes the transcription of viral DNA into RNA using the four ribonucleoside triphosphates as substrates. Responsible for the transcription of early, intermediate and late genes. DNA-dependent RNA polymerase associates with the early transcription factor (ETF) thereby allowing the early genes transcription. Late transcription, and probably also intermediate transcription, require newly synthesized RNA polymerase. This is DNA-directed RNA polymerase 18 kDa subunit (RPO18) from Vertebrata (FPV).